Reading from the N-terminus, the 113-residue chain is MLVNSYELMVILRPDLNEERVSQEVTKYQEFLTNNAAEEVSVKVWGKRRLAYQIRRFNDGIYVLFNFNGEGQQIALIERDMRLNDNVMRFLSIKLTPEKPEKEKKAKAVAVEA.

Belongs to the bacterial ribosomal protein bS6 family.

In terms of biological role, binds together with bS18 to 16S ribosomal RNA. The protein is Small ribosomal subunit protein bS6 (rpsF) of Synechocystis sp. (strain ATCC 27184 / PCC 6803 / Kazusa).